The following is a 467-amino-acid chain: Mothers against decapentaplegic homolog 2 (467 aa).

At Ser-2 the chain carries N-acetylserine. Phosphothreonine is present on Thr-8. One can recognise an MH1 domain in the interval 10–176 (PVVKRLLGWK…YQRVETPVLP (167 aa)). Lys-19 carries the post-translational modification N6-acetyllysine. Zn(2+) contacts are provided by Cys-74, Cys-149, Cys-161, and His-166. Over residues 207–217 (PAGIEPQSNYI) the composition is skewed to polar residues. Residues 207–251 (PAGIEPQSNYIPETPPPGYISEDGETSDQQLNQSMDTGSPAELSP) are disordered. Position 220 is a phosphothreonine (Thr-220). The PY-motif signature appears at 221-225 (PPPGY). Polar residues predominate over residues 233-243 (SDQQLNQSMDT). Ser-240 carries the post-translational modification Phosphoserine; by CAMK2. Phosphoserine is present on residues Ser-245, Ser-250, Ser-255, Ser-458, Ser-460, and Ser-464. An MH2 domain is found at 274-467 (WCSIAYYELN…SPSVRCSSMS (194 aa)). Ser-465 and Ser-467 each carry phosphoserine; by TGFBR1.

This sequence belongs to the dwarfin/SMAD family. As to quaternary structure, monomer; in the absence of TGF-beta. Heterodimer; in the presence of TGF-beta. Forms a heterodimer with co-SMAD, SMAD4, in the nucleus to form the transactivation complex SMAD2/SMAD4. Found in a complex with SMAD3 and TRIM33 upon addition of TGF-beta. Identified in a complex that contains at least ZNF451, SMAD2, SMAD3 and SMAD4. Interacts (via the MH2 domain) with ZFYVE9; may form trimers with the SMAD4 co-SMAD. Interacts with TAZ/WWRT1. Interacts with FOXH1. Interacts with SNW1. Interacts with CREB-binding protein (CBP) and EP300. Interacts with SNON. Interacts with ALK4/ACVR1B. Interacts with SKOR1. Interacts with SKOR2. Interacts with PRDM16. Interacts (via MH2 domain) with LEMD3. Interacts with RBPMS. Interacts with WWP1. Interacts (dephosphorylated form, via the MH1 and MH2 domains) with RANBP3 (via its C-terminal R domain); the interaction results in the export of dephosphorylated SMAD3 out of the nucleus and termination of the TGF-beta signaling. Interacts with PDPK1 (via PH domain). Interacts with DAB2; the interactions are enhanced upon TGF-beta stimulation. Interacts with USP15. Interacts with PPP5C. Interacts with LDLRAD4 (via the SMAD interaction motif). Interacts (via MH2 domain) with PMEPA1 (via the SMAD interaction motif). Interacts with ZFHX3. Interacts with ZNF451. Interacts with SMURF2 when phosphorylated on Ser-465/467. Interacts with PPM1A. Interacts with TGF-beta. Interacts with TGFBR1. Interacts with TGIF. Interacts with SMAD3 and TRIM33. Interacts with ZNF580. Interacts with NEDD4L in response to TGF-beta. Interacts with HGS. Interacts with AIP1. Interacts with WWP1. Interacts with PML. Interacts weakly with ZNF8. Interacts (when phosphorylated) with RNF111; RNF111 acts as an enhancer of the transcriptional responses by mediating ubiquitination and degradation of SMAD2 inhibitors. Interacts with YAP1 (when phosphorylated at 'Ser-112'). Interacts when phosphorylated with IPO7; the interaction facilitates translocation of SMAD2 to the nucleus. Interacts with MTMR4; negatively regulates TGF-beta signaling through SMAD2 dephosphorylation and retention in endosomes. In terms of processing, in response to TGF-beta, phosphorylated on the C-terminal SXS motif by TGF-beta and activin type 1 receptor kinases, phosphorylation declines progressively in a KMT5A-dependent manner. Phosphorylation in this motif is required for interaction with a number of proteins including SMURF2, SNON and SMAD4 in response to TGF-beta. Dephosphorylated in this motif by PPM1A leading to disruption of the SMAD2/3-SMAD4 complex, nuclear export and termination of the TGF-beta signaling. In response to decorin, the naturally occurring inhibitor of TGF-beta signaling, phosphorylated on Ser-240 by CaMK2. Phosphorylated by MAPK3 upon EGF stimulation; which increases transcriptional activity and stability, and is blocked by calmodulin. Phosphorylated by PDPK1. Post-translationally, in response to TGF-beta, ubiquitinated by NEDD4L; which promotes its degradation. Monoubiquitinated, leading to prevent DNA-binding. Deubiquitination by USP15 alleviates inhibition and promotes activation of TGF-beta target genes. Ubiquitinated by RNF111, leading to its degradation: only SMAD2 proteins that are 'in use' are targeted by RNF111, RNF111 playing a key role in activating SMAD2 and regulating its turnover. Acetylated on Lys-19 by coactivators in response to TGF-beta signaling, which increases transcriptional activity.

It is found in the cytoplasm. It localises to the nucleus. Receptor-regulated SMAD (R-SMAD) that is an intracellular signal transducer and transcriptional modulator activated by TGF-beta (transforming growth factor) and activin type 1 receptor kinases. Binds the TRE element in the promoter region of many genes that are regulated by TGF-beta and, on formation of the SMAD2/SMAD4 complex, activates transcription. Promotes TGFB1-mediated transcription of odontoblastic differentiation genes in dental papilla cells. Positively regulates PDPK1 kinase activity by stimulating its dissociation from the 14-3-3 protein YWHAQ which acts as a negative regulator. The protein is Mothers against decapentaplegic homolog 2 (Smad2) of Mus musculus (Mouse).